Reading from the N-terminus, the 414-residue chain is Dual-specificity RNA methyltransferase RlmN (414 aa).

Residues 1-20 (MMSTPETATEATAPEAAPAP) are compositionally biased toward low complexity. A disordered region spans residues 1 to 24 (MMSTPETATEATAPEAAPAPSLGA). The Proton acceptor role is filled by Glu-129. Positions 135 to 385 (ESDRGTLCVS…VRTPRGRDIL (251 aa)) constitute a Radical SAM core domain. A disulfide bridge links Cys-142 with Cys-388. The [4Fe-4S] cluster site is built by Cys-149, Cys-153, and Cys-156. S-adenosyl-L-methionine-binding positions include 214–215 (GE), Ser-246, 268–270 (SLH), and Asn-345. Cys-388 functions as the S-methylcysteine intermediate in the catalytic mechanism.

The protein belongs to the radical SAM superfamily. RlmN family. Requires [4Fe-4S] cluster as cofactor.

Its subcellular location is the cytoplasm. The enzyme catalyses adenosine(2503) in 23S rRNA + 2 reduced [2Fe-2S]-[ferredoxin] + 2 S-adenosyl-L-methionine = 2-methyladenosine(2503) in 23S rRNA + 5'-deoxyadenosine + L-methionine + 2 oxidized [2Fe-2S]-[ferredoxin] + S-adenosyl-L-homocysteine. It carries out the reaction adenosine(37) in tRNA + 2 reduced [2Fe-2S]-[ferredoxin] + 2 S-adenosyl-L-methionine = 2-methyladenosine(37) in tRNA + 5'-deoxyadenosine + L-methionine + 2 oxidized [2Fe-2S]-[ferredoxin] + S-adenosyl-L-homocysteine. Functionally, specifically methylates position 2 of adenine 2503 in 23S rRNA and position 2 of adenine 37 in tRNAs. m2A2503 modification seems to play a crucial role in the proofreading step occurring at the peptidyl transferase center and thus would serve to optimize ribosomal fidelity. The polypeptide is Dual-specificity RNA methyltransferase RlmN (Xanthobacter autotrophicus (strain ATCC BAA-1158 / Py2)).